The following is a 340-amino-acid chain: Guanine nucleotide-binding protein G(I)/G(S)/G(T) subunit beta-3 (340 aa).

WD repeat units lie at residues 53-83, 95-125, 141-170, 182-212, 224-254, 268-298, and 310-340; these read GHLA…IVWD, LRSS…SIYS, AHTG…ALWD, GHTG…KLWD, GHES…RLFD, SIIC…NVWD, and GHDN…KIWN.

It belongs to the WD repeat G protein beta family. In terms of assembly, g proteins are composed of 3 units, alpha, beta and gamma. Interacts with RASD2. Expressed at a high level in the heart and at a much lower level in the brain.

Its function is as follows. Guanine nucleotide-binding proteins (G proteins) are involved as a modulator or transducer in various transmembrane signaling systems. The beta and gamma chains are required for the GTPase activity, for replacement of GDP by GTP, and for G protein-effector interaction. This is Guanine nucleotide-binding protein G(I)/G(S)/G(T) subunit beta-3 (Gnb3) from Rattus norvegicus (Rat).